Reading from the N-terminus, the 157-residue chain is UPF0225 protein PA1039 (157 aa).

It belongs to the UPF0225 family.

The protein is UPF0225 protein PA1039 of Pseudomonas aeruginosa (strain ATCC 15692 / DSM 22644 / CIP 104116 / JCM 14847 / LMG 12228 / 1C / PRS 101 / PAO1).